The chain runs to 476 residues: Membrane-bound lytic murein transglycosylase F (476 aa).

The signal sequence occupies residues 1–16; it reads MIKTLFIILLCGILSA. The interval 17–259 is non-LT domain; it reads CQPVDIQDVD…HLNEKYFGHV (243 aa). The LT domain stretch occupies residues 260–476; the sequence is KRFDYVDTRA…VPAKSHVSAQ (217 aa). Glutamate 304 is an active-site residue.

The protein in the N-terminal section; belongs to the bacterial solute-binding protein 3 family. This sequence in the C-terminal section; belongs to the transglycosylase Slt family.

It is found in the cell outer membrane. The catalysed reaction is Exolytic cleavage of the (1-&gt;4)-beta-glycosidic linkage between N-acetylmuramic acid (MurNAc) and N-acetylglucosamine (GlcNAc) residues in peptidoglycan, from either the reducing or the non-reducing ends of the peptidoglycan chains, with concomitant formation of a 1,6-anhydrobond in the MurNAc residue.. In terms of biological role, murein-degrading enzyme that degrades murein glycan strands and insoluble, high-molecular weight murein sacculi, with the concomitant formation of a 1,6-anhydromuramoyl product. Lytic transglycosylases (LTs) play an integral role in the metabolism of the peptidoglycan (PG) sacculus. Their lytic action creates space within the PG sacculus to allow for its expansion as well as for the insertion of various structures such as secretion systems and flagella. The chain is Membrane-bound lytic murein transglycosylase F from Shewanella frigidimarina (strain NCIMB 400).